The following is a 736-amino-acid chain: Depolymerase, capsule KN4-specific (736 aa).

It is found in the virion. Functions as a receptor binding protein (RBP) and probably mediates the attachment to the host capsular exopolysaccharides. Displays a depolymerase activity that specifically degrades the KN4-type polysaccharides of Klebsiella pneumoniae capsule. The sequence is that of Depolymerase, capsule KN4-specific from Klebsiella phage K64-1 (Bacteriophage K64-1).